We begin with the raw amino-acid sequence, 170 residues long: Peptide deformylase 2 (170 aa).

Fe cation is bound by residues C94 and H136. Residue E137 is part of the active site. H140 provides a ligand contact to Fe cation.

Belongs to the polypeptide deformylase family. Fe(2+) serves as cofactor.

The catalysed reaction is N-terminal N-formyl-L-methionyl-[peptide] + H2O = N-terminal L-methionyl-[peptide] + formate. In terms of biological role, removes the formyl group from the N-terminal Met of newly synthesized proteins. Requires at least a dipeptide for an efficient rate of reaction. N-terminal L-methionine is a prerequisite for activity but the enzyme has broad specificity at other positions. The chain is Peptide deformylase 2 from Xanthomonas axonopodis pv. citri (strain 306).